An 838-amino-acid chain; its full sequence is Translation initiation factor IF-2 (838 aa).

Residues 1 to 235 (MSDTDGKKPL…RSLAAMKREQ (235 aa)) form a disordered region. Positions 18–27 (SGQVKQSFSH) are enriched in polar residues. A compositionally biased stretch (low complexity) spans 50–60 (SGSSTTTSSPS). Basic and acidic residues predominate over residues 88–156 (KLREVDDAKR…AARRAEEAKR (69 aa)). Residues 162–177 (PAAAQPDAADSRASAP) show a composition bias toward low complexity. Basic and acidic residues predominate over residues 187 to 208 (SRKEREREADRDRTTKKDDSRR). Residues 335 to 509 (PRPPIITIMG…ELLDLRANPK (175 aa)) enclose the tr-type G domain. Positions 344–351 (GHVDHGKT) are G1. Position 344 to 351 (344 to 351 (GHVDHGKT)) interacts with GTP. Residues 369–373 (GITQH) form a G2 region. The segment at 391-394 (DTPG) is G3. Residues 391-395 (DTPGH) and 445-448 (NKID) contribute to the GTP site. A G4 region spans residues 445–448 (NKID). The segment at 481 to 483 (SAK) is G5.

It belongs to the TRAFAC class translation factor GTPase superfamily. Classic translation factor GTPase family. IF-2 subfamily.

It localises to the cytoplasm. Its function is as follows. One of the essential components for the initiation of protein synthesis. Protects formylmethionyl-tRNA from spontaneous hydrolysis and promotes its binding to the 30S ribosomal subunits. Also involved in the hydrolysis of GTP during the formation of the 70S ribosomal complex. In Cereibacter sphaeroides (strain ATCC 17025 / ATH 2.4.3) (Rhodobacter sphaeroides), this protein is Translation initiation factor IF-2.